The primary structure comprises 300 residues: Ribosomal protein L11 methyltransferase (300 aa).

S-adenosyl-L-methionine-binding residues include Thr-147, Gly-168, Asp-190, and Asn-236.

Belongs to the methyltransferase superfamily. PrmA family.

The protein localises to the cytoplasm. It catalyses the reaction L-lysyl-[protein] + 3 S-adenosyl-L-methionine = N(6),N(6),N(6)-trimethyl-L-lysyl-[protein] + 3 S-adenosyl-L-homocysteine + 3 H(+). Its function is as follows. Methylates ribosomal protein L11. This is Ribosomal protein L11 methyltransferase from Leptospira borgpetersenii serovar Hardjo-bovis (strain JB197).